Reading from the N-terminus, the 323-residue chain is Arginase-1 (323 aa).

The tract at residues 1–27 (MSSKPKPIEIIGAPFSKGQPRGGVEKG) is disordered. K17 is modified (N6-succinyllysine). Phosphoserine is present on residues S62 and S72. K75 carries the N6-succinyllysine modification. 4 residues coordinate Mn(2+): H101, D124, H126, and D128. Substrate is bound by residues 126-130 (HTDIN) and 137-139 (SGN). S163 carries the post-translational modification Phosphoserine. D183 contacts substrate. A Phosphoserine modification is found at S217. D232 and D234 together coordinate Mn(2+). 2 residues coordinate substrate: T246 and E277. Position 281 is a phosphothreonine (T281).

It belongs to the arginase family. In terms of assembly, homotrimer. Interacts with CMTM6. Mn(2+) serves as cofactor. As to expression, detected in liver (at protein level).

It localises to the cytoplasm. The protein resides in the cytoplasmic granule. The enzyme catalyses L-arginine + H2O = urea + L-ornithine. The protein operates within nitrogen metabolism; urea cycle; L-ornithine and urea from L-arginine: step 1/1. With respect to regulation, inactivated by diethyl pyrocarbonate (DEPC). Functionally, key element of the urea cycle converting L-arginine to urea and L-ornithine, which is further metabolized into metabolites proline and polyamides that drive collagen synthesis and bioenergetic pathways critical for cell proliferation, respectively; the urea cycle takes place primarily in the liver and, to a lesser extent, in the kidneys. Its function is as follows. Functions in L-arginine homeostasis in nonhepatic tissues characterized by the competition between nitric oxide synthase (NOS) and arginase for the available intracellular substrate arginine. Arginine metabolism is a critical regulator of innate and adaptive immune responses. Involved in an antimicrobial effector pathway in polymorphonuclear granulocytes (PMN). Upon PMN cell death is liberated from the phagolysosome and depletes arginine in the microenvironment leading to suppressed T cell and natural killer (NK) cell proliferation and cytokine secretion. In group 2 innate lymphoid cells (ILC2s) promotes acute type 2 inflammation in the lung and is involved in optimal ILC2 proliferation but not survival. Plays a role in the immune response of alternatively activated or M2 macrophages in processes such as wound healing and tissue regeneration, immune defense against multicellular pathogens and parasites, and immune suppression and allergic inflammation; the regulatory outcome seems to be organ specific. In tumor-infiltrating dendritic cells (DCs) and myeloid-derived suppressor cells (MDSCs) plays a role in suppression of T cell-mediated antitumor immunity. The chain is Arginase-1 (Arg1) from Rattus norvegicus (Rat).